The following is a 105-amino-acid chain: Small ribosomal subunit protein eS25 (105 aa).

The protein belongs to the eukaryotic ribosomal protein eS25 family. As to quaternary structure, component of the small ribosomal subunit. Mature ribosomes consist of a small (40S) and a large (60S) subunit. The 40S subunit contains about 32 different proteins and 1 molecule of RNA (18S). The 60S subunit contains 45 different proteins and 3 molecules of RNA (25S, 5.8S and 5S).

The protein localises to the cytoplasm. Its function is as follows. Component of the ribosome, a large ribonucleoprotein complex responsible for the synthesis of proteins in the cell. The small ribosomal subunit (SSU) binds messenger RNAs (mRNAs) and translates the encoded message by selecting cognate aminoacyl-transfer RNA (tRNA) molecules. The large subunit (LSU) contains the ribosomal catalytic site termed the peptidyl transferase center (PTC), which catalyzes the formation of peptide bonds, thereby polymerizing the amino acids delivered by tRNAs into a polypeptide chain. The nascent polypeptides leave the ribosome through a tunnel in the LSU and interact with protein factors that function in enzymatic processing, targeting, and the membrane insertion of nascent chains at the exit of the ribosomal tunnel. The chain is Small ribosomal subunit protein eS25 (RPS25B) from Candida albicans (strain SC5314 / ATCC MYA-2876) (Yeast).